The sequence spans 324 residues: Acetyl-coenzyme A carboxylase carboxyl transferase subunit beta (324 aa).

Residues 28–297 (LWCKCPSCNA…AVAPAAAKAP (270 aa)) form the CoA carboxyltransferase N-terminal domain. Zn(2+) contacts are provided by Cys32, Cys35, Cys51, and Cys54. A C4-type zinc finger spans residues 32–54 (CPSCNAILYKSEVERNLEVCPKC).

This sequence belongs to the AccD/PCCB family. Acetyl-CoA carboxylase is a heterohexamer composed of biotin carboxyl carrier protein (AccB), biotin carboxylase (AccC) and two subunits each of ACCase subunit alpha (AccA) and ACCase subunit beta (AccD). Requires Zn(2+) as cofactor.

The protein resides in the cytoplasm. The enzyme catalyses N(6)-carboxybiotinyl-L-lysyl-[protein] + acetyl-CoA = N(6)-biotinyl-L-lysyl-[protein] + malonyl-CoA. It participates in lipid metabolism; malonyl-CoA biosynthesis; malonyl-CoA from acetyl-CoA: step 1/1. Functionally, component of the acetyl coenzyme A carboxylase (ACC) complex. Biotin carboxylase (BC) catalyzes the carboxylation of biotin on its carrier protein (BCCP) and then the CO(2) group is transferred by the transcarboxylase to acetyl-CoA to form malonyl-CoA. The sequence is that of Acetyl-coenzyme A carboxylase carboxyl transferase subunit beta from Methylococcus capsulatus (strain ATCC 33009 / NCIMB 11132 / Bath).